We begin with the raw amino-acid sequence, 201 residues long: FMN-dependent NADH:quinone oxidoreductase (201 aa).

FMN-binding positions include S10, 16-18 (SQS), 96-99 (MYNF), and 140-143 (SRGG).

This sequence belongs to the azoreductase type 1 family. As to quaternary structure, homodimer. It depends on FMN as a cofactor.

It catalyses the reaction 2 a quinone + NADH + H(+) = 2 a 1,4-benzosemiquinone + NAD(+). The enzyme catalyses N,N-dimethyl-1,4-phenylenediamine + anthranilate + 2 NAD(+) = 2-(4-dimethylaminophenyl)diazenylbenzoate + 2 NADH + 2 H(+). Quinone reductase that provides resistance to thiol-specific stress caused by electrophilic quinones. In terms of biological role, also exhibits azoreductase activity. Catalyzes the reductive cleavage of the azo bond in aromatic azo compounds to the corresponding amines. The protein is FMN-dependent NADH:quinone oxidoreductase of Cronobacter sakazakii (strain ATCC BAA-894) (Enterobacter sakazakii).